Consider the following 474-residue polypeptide: MSSTATVTESTHFFPNEPQGPSIKTETIPGPKGKAAAEEMSKYHDISAVKFPVDYEKSIGNYLVDLDGNVLLDVYSQIATIPIGYNNPTLLKAAKSDEVATILMNRPALGNYPPKEWARVAYEGAIKYAPKGQKYVYFQMSGSDANEIAYKLAMLHHFNNKPRPTGDYTAEENESCLNNAAPGSPEVAVLSFRHSFHGRLFGSLSTTRSKPVHKLGMPAFPWPQADFPALKYPLEEHVEENAKEEQRCIDQVEQILTNHHCPVVACIIEPIQSEGGDNHASPDFFHKLQATLKKHDVKFIVDEVQTGVGSTGTLWAHEQWNLPYPPDMVTFSKKFQAAGIFYHDLALRPHAYQHFNTWMGDPFRAVQSRYILQEIQDKDLLNNVKSVGDFLYAGLEELARKHPGKINNLRGKGKGTFIAWDCESPAARDKFCADMRINGVNIGGCGVAAIRLRPMLVFQKHHAQILLKKIDELI.

The span at 1–13 shows a compositional bias: polar residues; it reads MSSTATVTESTHF. Residues 1–31 are disordered; that stretch reads MSSTATVTESTHFFPNEPQGPSIKTETIPGP. A pyridoxal 5'-phosphate-binding site is contributed by 142-143; the sequence is GS. Arginine 199 contacts substrate. Lysine 333 is subject to N6-(pyridoxal phosphate)lysine. Threonine 357 contacts pyridoxal 5'-phosphate.

The protein belongs to the class-III pyridoxal-phosphate-dependent aminotransferase family. In terms of assembly, homodimer. The cofactor is pyridoxal 5'-phosphate.

Its subcellular location is the cytoplasm. It carries out the reaction 4-aminobutanoate + 2-oxoglutarate = succinate semialdehyde + L-glutamate. Functionally, required for the degradation of gamma-aminobutyric acid (GABA), which is important for utilization of GABA as nitrogen source. Deaminates GABA to succinate-semialdehyde, which in turn is converted to succinate by the succinate semialdehyde dehydrogenase. Cannot transaminate beta-alanine (BAL). This Schizosaccharomyces pombe (strain 972 / ATCC 24843) (Fission yeast) protein is 4-aminobutyrate aminotransferase (uga1).